The following is a 90-amino-acid chain: Sec-independent protein translocase protein TatA (90 aa).

A helical membrane pass occupies residues 1-21; the sequence is MGLPGGWELVLIVGVLVLLFG. Positions 42 to 60 are enriched in basic and acidic residues; it reads EARGMKEDEEAAKREKQAK. The interval 42–90 is disordered; sequence EARGMKEDEEAAKREKQAKSEPQQLTAGESSAPTVASPVEETQRNDSKK. Polar residues predominate over residues 61 to 75; that stretch reads SEPQQLTAGESSAPT.

The protein belongs to the TatA/E family. In terms of assembly, the Tat system comprises two distinct complexes: a TatABC complex, containing multiple copies of TatA, TatB and TatC subunits, and a separate TatA complex, containing only TatA subunits. Substrates initially bind to the TatABC complex, which probably triggers association of the separate TatA complex to form the active translocon.

Its subcellular location is the cell membrane. Part of the twin-arginine translocation (Tat) system that transports large folded proteins containing a characteristic twin-arginine motif in their signal peptide across membranes. TatA could form the protein-conducting channel of the Tat system. The sequence is that of Sec-independent protein translocase protein TatA from Saccharopolyspora erythraea (strain ATCC 11635 / DSM 40517 / JCM 4748 / NBRC 13426 / NCIMB 8594 / NRRL 2338).